A 666-amino-acid chain; its full sequence is E3 ubiquitin-protein ligase MBR2 (666 aa).

Composition is skewed to polar residues over residues 1–14 (MQGP…STGI), 23–35 (CSTN…NNIL), 42–58 (FPNN…ASSS), and 73–88 (SSSR…SNGS). 6 disordered regions span residues 1-58 (MQGP…ASSS), 73-95 (SSSR…RQLL), 155-179 (SLGS…GLGS), 221-329 (SSLS…DGQP), 400-433 (NPST…TPHN), and 457-491 (GASL…RQRR). Residues 221-239 (SSLSLSMPSQNSPNVNNQS) are compositionally biased toward low complexity. Polar residues-rich tracts occupy residues 258–268 (AFPSTRSTETI), 286–303 (FSFT…QLPA), and 414–433 (GSSS…TPHN). An RING-type; atypical zinc finger spans residues 619 to 660 (CCVCQEEYAEGDDLGTLGCGHEFHTACVKQWLMLKNLCPICK).

Belongs to the RING-type zinc finger family. In terms of assembly, interacts with MED25 and UBC11.

It carries out the reaction S-ubiquitinyl-[E2 ubiquitin-conjugating enzyme]-L-cysteine + [acceptor protein]-L-lysine = [E2 ubiquitin-conjugating enzyme]-L-cysteine + N(6)-ubiquitinyl-[acceptor protein]-L-lysine.. Its pathway is protein modification; protein ubiquitination. In terms of biological role, E3 ubiquitin-protein ligase that functions as a regulator of MED25 stability by targeting MED25 for degradation in a RING-H2-dependent way. Proteasome-dependent degradation of MED25 seems to activate its function as positive regulator of FLOWERING LOCUS T (FT) and is important to induce the expression of FT and consequently to promote flowering. May function downstream of HAL3 and be required for HAL3-regulated plant growth. Activation of MBR2 by HAL3 may lead to the degradation of cell cycle suppressors, resulting in enhancement of cell division and plant growth. The chain is E3 ubiquitin-protein ligase MBR2 (MBR2) from Arabidopsis thaliana (Mouse-ear cress).